The sequence spans 656 residues: Protein O1 homolog (656 aa).

Residues 544–564 (FIKKVILANVIFEYIFTLIII) form a helical membrane-spanning segment.

The protein belongs to the chordopoxvirinae O1 family.

The protein resides in the membrane. The protein is Protein O1 homolog of Vertebrata (FPV).